A 133-amino-acid polypeptide reads, in one-letter code: Transcription antitermination protein NusB (133 aa).

This sequence belongs to the NusB family.

Involved in transcription antitermination. Required for transcription of ribosomal RNA (rRNA) genes. Binds specifically to the boxA antiterminator sequence of the ribosomal RNA (rrn) operons. In Shouchella clausii (strain KSM-K16) (Alkalihalobacillus clausii), this protein is Transcription antitermination protein NusB.